The following is a 609-amino-acid chain: tRNA uridine 5-carboxymethylaminomethyl modification enzyme MnmG (609 aa).

FAD contacts are provided by residues 11 to 16 (GAGHAG), Val-123, and Thr-178. 270 to 284 (GPRYCPSIEDKVVRF) contributes to the NAD(+) binding site. Gln-367 is an FAD binding site.

Belongs to the MnmG family. In terms of assembly, homodimer. Heterotetramer of two MnmE and two MnmG subunits. The cofactor is FAD.

It is found in the cytoplasm. NAD-binding protein involved in the addition of a carboxymethylaminomethyl (cmnm) group at the wobble position (U34) of certain tRNAs, forming tRNA-cmnm(5)s(2)U34. The polypeptide is tRNA uridine 5-carboxymethylaminomethyl modification enzyme MnmG (Mycoplasmopsis synoviae (strain 53) (Mycoplasma synoviae)).